A 221-amino-acid chain; its full sequence is Probable septum site-determining protein MinC (221 aa).

The protein belongs to the MinC family. As to quaternary structure, interacts with MinD and FtsZ.

Functionally, cell division inhibitor that blocks the formation of polar Z ring septums. Rapidly oscillates between the poles of the cell to destabilize FtsZ filaments that have formed before they mature into polar Z rings. Prevents FtsZ polymerization. This chain is Probable septum site-determining protein MinC, found in Shewanella denitrificans (strain OS217 / ATCC BAA-1090 / DSM 15013).